Here is a 379-residue protein sequence, read N- to C-terminus: Anhydro-N-acetylmuramic acid kinase (379 aa).

Residue 9-16 (GTSVDGID) coordinates ATP.

It belongs to the anhydro-N-acetylmuramic acid kinase family.

The enzyme catalyses 1,6-anhydro-N-acetyl-beta-muramate + ATP + H2O = N-acetyl-D-muramate 6-phosphate + ADP + H(+). The protein operates within amino-sugar metabolism; 1,6-anhydro-N-acetylmuramate degradation. It functions in the pathway cell wall biogenesis; peptidoglycan recycling. In terms of biological role, catalyzes the specific phosphorylation of 1,6-anhydro-N-acetylmuramic acid (anhMurNAc) with the simultaneous cleavage of the 1,6-anhydro ring, generating MurNAc-6-P. Is required for the utilization of anhMurNAc either imported from the medium or derived from its own cell wall murein, and thus plays a role in cell wall recycling. This is Anhydro-N-acetylmuramic acid kinase from Picosynechococcus sp. (strain ATCC 27264 / PCC 7002 / PR-6) (Agmenellum quadruplicatum).